A 203-amino-acid chain; its full sequence is MKKMAIACALLSSVVASSVWADAASSLKSRLDKVSSFHATFTQKVTDGSGAAVQEGQGDLWVKRPNLFNWHMTQPDESILVSDGKTLWFYNPFVEQATATWLKDATGNTPFMLIARNQASDWQQYNIKQDGDNFVLTPKASNGNLKQFTINVGRDGTIHQFSAVEQDDQRSAYQLKSQQNGAVDPSKFTFTPPQGVTIDDQRK.

Positions 1 to 21 (MKKMAIACALLSSVVASSVWA) are cleaved as a signal peptide. Residues 178-203 (QQNGAVDPSKFTFTPPQGVTIDDQRK) are disordered.

This sequence belongs to the LolA family. Monomer.

It is found in the periplasm. Functionally, participates in the translocation of lipoproteins from the inner membrane to the outer membrane. Only forms a complex with a lipoprotein if the residue after the N-terminal Cys is not an aspartate (The Asp acts as a targeting signal to indicate that the lipoprotein should stay in the inner membrane). This is Outer-membrane lipoprotein carrier protein from Salmonella agona (strain SL483).